Consider the following 278-residue polypeptide: Elongation factor Ts (278 aa).

The interval 79–82 (TDFV) is involved in Mg(2+) ion dislocation from EF-Tu.

This sequence belongs to the EF-Ts family.

Its subcellular location is the cytoplasm. Associates with the EF-Tu.GDP complex and induces the exchange of GDP to GTP. It remains bound to the aminoacyl-tRNA.EF-Tu.GTP complex up to the GTP hydrolysis stage on the ribosome. In Borrelia recurrentis (strain A1), this protein is Elongation factor Ts.